A 375-amino-acid chain; its full sequence is Sulfite efflux pump SSU1 (375 aa).

The Cytoplasmic segment spans residues 1–25 (MPSGSGFHNIEEAGEKARKRDDWIA). Residues 26-46 (ISNFHPGWFSVNMGTGITAIL) traverse the membrane as a helical segment. Topologically, residues 47–59 (LQNLPYQFPGLHY) are extracellular. A helical membrane pass occupies residues 60 to 80 (IAVILFILNVIIFFLFLTISI). The Cytoplasmic portion of the chain corresponds to 81-101 (TRYCLWPDKFKAMLAHPAHSM). The helical transmembrane segment at 102–122 (LLGTFPMGFATIINCIVFICV) threads the bilayer. Over 123 to 135 (PVWGEWASRFAWG) the chain is Extracellular. Residues 136 to 156 (LWWIDAAVSVAICYFVPFMLM) traverse the membrane as a helical segment. The Cytoplasmic portion of the chain corresponds to 157 to 167 (TKHTSSLETMT). Residues 168-188 (AAWLLPIVAPVVAAASGGVVA) form a helical membrane-spanning segment. At 189–200 (DSLQNDTHALIT) the chain is on the extracellular side. Asparagine 193 is a glycosylation site (N-linked (GlcNAc...) asparagine). The chain crosses the membrane as a helical span at residues 201-221 (ILVCYVMWGSAVPLAMVILVI). At 222–234 (YFQRLAIHKLVPR) the chain is on the cytoplasmic side. Residues 235-255 (AAIVSALLPIGPLGQGGFGLM) traverse the membrane as a helical segment. The Extracellular portion of the chain corresponds to 256–277 (QLGVVAKRVFPRLDFLAPIAGD). A helical transmembrane segment spans residues 278–298 (IFYVMGAFIAMIMWGFGLIWL). Residues 299–309 (WFALASFTRGK) are Cytoplasmic-facing. Residues 310–330 (FYFNIGWWAFTFPLGVFTTAT) form a helical membrane-spanning segment. At 331–343 (TQMGKEFNSPFFD) the chain is on the extracellular side. The helical transmembrane segment at 344-364 (ILGTFFSIVVTCMWVLVFALT) threads the bilayer. Topologically, residues 365-375 (VYKSCTKELFR) are cytoplasmic.

Belongs to the tellurite-resistance/dicarboxylate transporter (TDT) family.

It localises to the cell membrane. Sulphite efflux pump required for the secretion of sulphite as a reducing agent. In the presence of sulphite, cystine in keratin is directly cleaved to cysteine and S-sulphocysteine, and thereby, reduced proteins become accessible to hydrolysis by a variety of secreted endo- and exoproteases. Excretion of sulphite mediated by an efflux pump also represents a detoxification pathway for dermatophytes during infection of the epidermal stratum corneum, hair and nails, which are rich in cysteine. The sequence is that of Sulfite efflux pump SSU1 from Arthroderma benhamiae (strain ATCC MYA-4681 / CBS 112371) (Trichophyton mentagrophytes).